The following is a 455-amino-acid chain: Peroxisomal membrane protein PEX3 (455 aa).

The span at 113–125 (TVLSDDFSTSQEG) shows a compositional bias: polar residues. Residues 113-135 (TVLSDDFSTSQEGAISEDTNKPP) are disordered. The chain crosses the membrane as a helical span at residues 155-171 (FLTLIYCESLLIVFLHL).

The protein belongs to the peroxin-3 family. Component of the peroxisomal docking complex, composed of at least PEX3, PEX13, PEX14 and PEX17. Component of the peroxisomal translocation complex, composed of at least PEX3, PEX2, PEX10 and PEX12. Interacts with PEX19. Interacts with the pexophagy receptor ATG30.

It is found in the peroxisome membrane. Peroxisomal membrane protein required for peroxisome biosynthesis. Shared component of both the peroxisomal docking complex and the peroxisomal translocation complex. The two types of peroxisomal matrix targeting signals, PTS1 and PTS2, are first recognized in the cytosol by their receptors PEX5 and PEX7, respectively, which then carry the cargo to the peroxisomal membrane. The peroxisomal targeting signal (PTS) receptor-cargo complexes interact with peroxisomal membrane protein (PMP) components of the docking complex. They have then additional downstream interactions with the translocation complex, leading to the transport of fully folded and oligomerized cargo into the peroxisome matrix. PEX3 acts as an anchoring site for PEX19 on the peroxisomal membrane and thus plays a crucial role in the assembly of the peroxisomal translocation complex. Is also essential for the interaction between the two complexes. Finally. PEX3 activates selective autophagy of peroxisomes (pexophagy) via interaction with the pexophagy receptor ATG30. In Komagataella phaffii (strain GS115 / ATCC 20864) (Yeast), this protein is Peroxisomal membrane protein PEX3.